The primary structure comprises 352 residues: Molybdenum import ATP-binding protein ModC (352 aa).

The 229-residue stretch at 1–229 folds into the ABC transporter domain; sequence MLELNFSQTL…SVMNPWLPKE (229 aa). 31 to 38 contributes to the ATP binding site; the sequence is GVSGAGKT. Positions 289–352 constitute a Mop domain; it reads QTSIRNVLRA…AQIKSVSITA (64 aa).

This sequence belongs to the ABC transporter superfamily. Molybdate importer (TC 3.A.1.8) family. In terms of assembly, the complex is composed of two ATP-binding proteins (ModC), two transmembrane proteins (ModB) and a solute-binding protein (ModA).

The protein resides in the cell inner membrane. The enzyme catalyses molybdate(out) + ATP + H2O = molybdate(in) + ADP + phosphate + H(+). Its function is as follows. Part of the ABC transporter complex ModABC involved in molybdenum import. Responsible for energy coupling to the transport system. This Shigella dysenteriae serotype 1 (strain Sd197) protein is Molybdenum import ATP-binding protein ModC.